The following is a 202-amino-acid chain: Imidazoleglycerol-phosphate dehydratase (202 aa).

Belongs to the imidazoleglycerol-phosphate dehydratase family.

Its subcellular location is the cytoplasm. The catalysed reaction is D-erythro-1-(imidazol-4-yl)glycerol 3-phosphate = 3-(imidazol-4-yl)-2-oxopropyl phosphate + H2O. The protein operates within amino-acid biosynthesis; L-histidine biosynthesis; L-histidine from 5-phospho-alpha-D-ribose 1-diphosphate: step 6/9. In Brucella anthropi (strain ATCC 49188 / DSM 6882 / CCUG 24695 / JCM 21032 / LMG 3331 / NBRC 15819 / NCTC 12168 / Alc 37) (Ochrobactrum anthropi), this protein is Imidazoleglycerol-phosphate dehydratase.